We begin with the raw amino-acid sequence, 666 residues long: 1-deoxy-D-xylulose-5-phosphate synthase (666 aa).

Thiamine diphosphate is bound by residues H103 and 144–146 (AHS). D175 lines the Mg(2+) pocket. Residues 176-177 (GA), N204, Y314, and E396 contribute to the thiamine diphosphate site. N204 is a binding site for Mg(2+).

The protein belongs to the transketolase family. DXPS subfamily. As to quaternary structure, homodimer. It depends on Mg(2+) as a cofactor. Thiamine diphosphate is required as a cofactor.

It carries out the reaction D-glyceraldehyde 3-phosphate + pyruvate + H(+) = 1-deoxy-D-xylulose 5-phosphate + CO2. It functions in the pathway metabolic intermediate biosynthesis; 1-deoxy-D-xylulose 5-phosphate biosynthesis; 1-deoxy-D-xylulose 5-phosphate from D-glyceraldehyde 3-phosphate and pyruvate: step 1/1. Functionally, catalyzes the acyloin condensation reaction between C atoms 2 and 3 of pyruvate and glyceraldehyde 3-phosphate to yield 1-deoxy-D-xylulose-5-phosphate (DXP). The sequence is that of 1-deoxy-D-xylulose-5-phosphate synthase from Nitrobacter winogradskyi (strain ATCC 25391 / DSM 10237 / CIP 104748 / NCIMB 11846 / Nb-255).